Consider the following 421-residue polypeptide: Inner membrane transport protein YdiN (421 aa).

At 1-9 the chain is on the cytoplasmic side; that stretch reads MSQNKAFST. A helical membrane pass occupies residues 10 to 30; the sequence is PFILAVLCIYFSYFLHGISVI. Residues 31–49 are Periplasmic-facing; sequence TLAQNMSSLAEKFSTDNAG. A helical transmembrane segment spans residues 50–70; sequence IAYLISGIGLGRLISILFFGV. The Cytoplasmic portion of the chain corresponds to 71-78; sequence ISDKFGRR. A helical membrane pass occupies residues 79–99; it reads AVILMAVIMYLLFFFGIPACP. N100 is a topological domain (periplasmic). A helical transmembrane segment spans residues 101 to 121; the sequence is LTLAYGLAVCVGIANSALDTG. The Cytoplasmic portion of the chain corresponds to 122-136; it reads GYPALMECFPKASGS. The helical transmembrane segment at 137–157 threads the bilayer; it reads AVILVKAMVSFGQMFYPMLVS. The Periplasmic portion of the chain corresponds to 158–163; the sequence is YMLLNN. Residues 164–184 traverse the membrane as a helical segment; the sequence is IWYGYGLIIPGILFVLITLML. Residues 185–215 lie on the Cytoplasmic side of the membrane; the sequence is LKSKFPSQLVDASVTNELPQMNSKPLVWLEG. A helical membrane pass occupies residues 216–236; it reads VSSVLFGVAAFSTFYVIVVWM. Residues 237-251 lie on the Periplasmic side of the membrane; sequence PKYAMAFAGMSEAEA. Residues 252–272 traverse the membrane as a helical segment; it reads LKTISYYSMGSLVCVFIFAAL. Residues 273–279 lie on the Cytoplasmic side of the membrane; sequence LKKMVRP. A helical membrane pass occupies residues 280-300; it reads IWANVFNSALATITAAIIYLY. The Periplasmic segment spans residues 301 to 308; that stretch reads PSPLVCNA. A helical membrane pass occupies residues 309–329; sequence GAFVIGFSAAGGILQLGVSVM. Residues 330–342 are Cytoplasmic-facing; it reads SEFFPKSKAKVTS. Residues 343–363 form a helical membrane-spanning segment; the sequence is IYMMMGGLANFVIPLITGYLS. The Periplasmic segment spans residues 364–369; that stretch reads NIGLQY. The chain crosses the membrane as a helical span at residues 370-390; sequence IIVLDFTFALLALITAIIVFI. The Cytoplasmic segment spans residues 391 to 421; that stretch reads RYYRVFIIPENDVRFGERKFCTRLNTIKHRG.

Belongs to the major facilitator superfamily.

It localises to the cell inner membrane. The chain is Inner membrane transport protein YdiN (ydiN) from Escherichia coli (strain K12).